The following is a 652-amino-acid chain: Acetyl-coenzyme A synthetase (652 aa).

Residues 189 to 192 and Thr311 each bind CoA; that span reads RGDK. ATP contacts are provided by residues 387–389, 411–416, Asp500, and Arg515; these read GEP and DTWWQT. Ser523 contributes to the CoA binding site. Residue Arg526 coordinates ATP. 2 residues coordinate Mg(2+): His539 and Val542. Arg584 contributes to the CoA binding site. The residue at position 609 (Lys609) is an N6-acetyllysine.

Belongs to the ATP-dependent AMP-binding enzyme family. Requires Mg(2+) as cofactor. In terms of processing, acetylated. Deacetylation by the SIR2-homolog deacetylase activates the enzyme.

The enzyme catalyses acetate + ATP + CoA = acetyl-CoA + AMP + diphosphate. Catalyzes the conversion of acetate into acetyl-CoA (AcCoA), an essential intermediate at the junction of anabolic and catabolic pathways. AcsA undergoes a two-step reaction. In the first half reaction, AcsA combines acetate with ATP to form acetyl-adenylate (AcAMP) intermediate. In the second half reaction, it can then transfer the acetyl group from AcAMP to the sulfhydryl group of CoA, forming the product AcCoA. The polypeptide is Acetyl-coenzyme A synthetase (Bartonella bacilliformis (strain ATCC 35685 / KC583 / Herrer 020/F12,63)).